The primary structure comprises 344 residues: Phenylalanine--tRNA ligase alpha subunit (344 aa).

Residue Glu256 participates in Mg(2+) binding.

The protein belongs to the class-II aminoacyl-tRNA synthetase family. Phe-tRNA synthetase alpha subunit type 1 subfamily. As to quaternary structure, tetramer of two alpha and two beta subunits. Mg(2+) is required as a cofactor.

The protein resides in the cytoplasm. The catalysed reaction is tRNA(Phe) + L-phenylalanine + ATP = L-phenylalanyl-tRNA(Phe) + AMP + diphosphate + H(+). The protein is Phenylalanine--tRNA ligase alpha subunit (pheS) of Halalkalibacterium halodurans (strain ATCC BAA-125 / DSM 18197 / FERM 7344 / JCM 9153 / C-125) (Bacillus halodurans).